A 248-amino-acid chain; its full sequence is ATP synthase subunit a, chloroplastic (248 aa).

5 helical membrane passes run 38–58 (QVLI…TLAV), 96–116 (VPFI…GALF), 135–155 (INTT…AGFT), 200–220 (LVVA…VMFL), and 221–241 (GLFT…AYIG).

The protein belongs to the ATPase A chain family. As to quaternary structure, F-type ATPases have 2 components, CF(1) - the catalytic core - and CF(0) - the membrane proton channel. CF(1) has five subunits: alpha(3), beta(3), gamma(1), delta(1), epsilon(1). CF(0) has four main subunits: a, b, b' and c.

It is found in the plastid. It localises to the chloroplast thylakoid membrane. Functionally, key component of the proton channel; it plays a direct role in the translocation of protons across the membrane. The protein is ATP synthase subunit a, chloroplastic of Cryptomeria japonica (Japanese cedar).